Consider the following 269-residue polypeptide: Imidazoleglycerol-phosphate dehydratase 1, chloroplastic (269 aa).

Disordered regions lie at residues 1–31 and 54–73; these read MTTA…GSGG and SGVG…VSSR. The N-terminal 52 residues, 1 to 52, are a transit peptide targeting the chloroplast; that stretch reads MTTAPFVSPSLPRLHSARASPFPKPSVGSGGGVAFPARTYGSSLRLRSAVMS. Substrate-binding positions include Glu83, 109–117, 135–139, Arg161, and Arg183; these read HMLDQLASH and HHSNE. Mn(2+) contacts are provided by His109, His135, His136, and Glu139. His207, His231, His232, and Glu235 together coordinate Mn(2+). Substrate is bound by residues 231-239 and 261-263; these read HHIIEATFK and SSK.

This sequence belongs to the imidazoleglycerol-phosphate dehydratase family. Requires Mn(2+) as cofactor.

The protein localises to the plastid. Its subcellular location is the chloroplast. The enzyme catalyses D-erythro-1-(imidazol-4-yl)glycerol 3-phosphate = 3-(imidazol-4-yl)-2-oxopropyl phosphate + H2O. The protein operates within amino-acid biosynthesis; L-histidine biosynthesis; L-histidine from 5-phospho-alpha-D-ribose 1-diphosphate: step 6/9. The sequence is that of Imidazoleglycerol-phosphate dehydratase 1, chloroplastic from Triticum aestivum (Wheat).